Reading from the N-terminus, the 181-residue chain is Peptide methionine sulfoxide reductase MsrA (181 aa).

Residue cysteine 14 is part of the active site.

This sequence belongs to the MsrA Met sulfoxide reductase family.

The enzyme catalyses L-methionyl-[protein] + [thioredoxin]-disulfide + H2O = L-methionyl-(S)-S-oxide-[protein] + [thioredoxin]-dithiol. It carries out the reaction [thioredoxin]-disulfide + L-methionine + H2O = L-methionine (S)-S-oxide + [thioredoxin]-dithiol. Functionally, has an important function as a repair enzyme for proteins that have been inactivated by oxidation. Catalyzes the reversible oxidation-reduction of methionine sulfoxide in proteins to methionine. This Bacillus licheniformis (strain ATCC 14580 / DSM 13 / JCM 2505 / CCUG 7422 / NBRC 12200 / NCIMB 9375 / NCTC 10341 / NRRL NRS-1264 / Gibson 46) protein is Peptide methionine sulfoxide reductase MsrA.